We begin with the raw amino-acid sequence, 338 residues long: Fructose-1,6-bisphosphatase class 1 (338 aa).

Mg(2+)-binding residues include Glu90, Asp112, Leu114, and Asp115. Substrate contacts are provided by residues 115-118 (DGSS), Asn207, and Lys273. Glu279 contributes to the Mg(2+) binding site.

Belongs to the FBPase class 1 family. In terms of assembly, homotetramer. Mg(2+) serves as cofactor.

It localises to the cytoplasm. It catalyses the reaction beta-D-fructose 1,6-bisphosphate + H2O = beta-D-fructose 6-phosphate + phosphate. It participates in carbohydrate biosynthesis; gluconeogenesis. This chain is Fructose-1,6-bisphosphatase class 1, found in Stenotrophomonas maltophilia (strain R551-3).